We begin with the raw amino-acid sequence, 383 residues long: Ovalbumin (383 aa).

Gly-2 bears the N-acetylglycine mark. Positions 22-48 (HHANDNMLYSPFAILSTLAMVFLGAKD) form a signal peptide, not cleaved. Position 69 is a phosphoserine (Ser-69). A disulfide bridge links Cys-74 with Cys-121. N-linked (GlcNAc...) asparagine glycosylation is found at Asn-293 and Asn-312. Phosphoserine is present on Ser-345.

The protein belongs to the serpin family. Ov-serpin subfamily. In terms of processing, the signal sequence is not cleaved. The functional signal for membrane translocation of ovalbumin becomes accessible when the nascent chain is 50 to 60 residues long. The hydrophobic sequence which lies between residues 27 and 43 folds back on the preceding residues to form an amphipathic hairpin structure which is the signal element recognized by the membrane. As to expression, major protein of egg white.

It localises to the secreted. Functionally, storage protein of egg white. Lack protease inhibitory activity. This is Ovalbumin (SERPINB14) from Coturnix japonica (Japanese quail).